A 149-amino-acid polypeptide reads, in one-letter code: Putative sugar phosphate isomerase YwlF (149 aa).

H9 is a binding site for substrate. The active-site Proton acceptor is C66. 67–72 (GTGIGM) provides a ligand contact to substrate. The Proton donor role is filled by H99. R133 is a binding site for substrate.

The protein belongs to the LacAB/RpiB family.

The sequence is that of Putative sugar phosphate isomerase YwlF (ywlF) from Bacillus subtilis (strain 168).